The sequence spans 70 residues: SPbeta prophage-derived uncharacterized protein YotJ (70 aa).

The polypeptide is SPbeta prophage-derived uncharacterized protein YotJ (yotJ) (Bacillus subtilis (strain 168)).